The primary structure comprises 354 residues: Interferon-inducible protein AIM2 (354 aa).

Residues Met-1–Glu-87 enclose the Pyrin domain. The tract at residues Asn-95–Asp-124 is disordered. The segment covering Gln-109–Arg-120 has biased composition (polar residues). Residues Met-144–Ile-341 enclose the HIN-200 domain.

Belongs to the HIN-200 family. As to quaternary structure, self-associates; forms homooligomers in response to cytosolic double-stranded DNA (dsDNA) and the dsDNA seems to serve as oligomerization platform. Component of AIM2 inflammasome, which consists of a signal sensor component (AIM2), an adapter (PYCARD/ASC), which recruits an effector pro-inflammatory caspase (CASP1). Interacts (via pyrin domain) with PYCARD/ASC (via pyrin domain); interaction is direct. Component of the AIM2 PANoptosome complex, a multiprotein complex that drives inflammatory cell death (PANoptosis). Interacts with EIF2AK2/PKR. Interacts with MAPRE1. Interacts (via HIN-200 domain) with IFI202 (via HIN-200 domain 2); preventing activation of the AIM2 inflammasome. Interacts with RACK1; promoting association with PP2A phosphatase and dephosphorylation of AKT1. Interacts with TRIM11; promoting AIM2 recruitment to autophagosomes and autophagy-dependent degradation. Degraded via selective autophagy following interaction with TRIM11. Expressed in developing neurons. Highly expressed in regulatory T-cells (Treg).

The protein localises to the cytoplasm. Its subcellular location is the inflammasome. It is found in the nucleus. Inactive in absence of double-stranded DNA (dsDNA). Homooligomerizes upon binding to dsDNA, dsDNA serving as an oligomerization platform. AIM2 requires large dsDNA to generate a structural template that couples dsDNA ligand-binding and homooligomerization. Homooligomerization is followed by recruitment of PYCARD/ASC to initiate speck formation (nucleation). AIM2 and PYCARD/ASC homooligomer filaments assemble bidirectionally and the recognition between AIM2 and PYCARD/ASC oligomers occurs in a head-to-tail manner. Clustered PYCARD/ASC nucleates the formation of CASP1 filaments through the interaction of their respective CARD domains, acting as a platform for CASP1 polymerization and activation. Active CASP1 then specifically processes protein precursors, such as gasdermin-D (GSDMD), IL1B and IL18, leading to the release of mature cytokines in the extracellular milieu or pyroptosis, depending on cell type. AIM2 can be activated in response to events that cause genomic DNA (HIV protease inhibitor nelfinavir) or mitochondrial DNA release in the cytoplasm (such as Perfluoroalkyl substance pollutants or cholesterol overload). Activation of the AIM2 inflammasome is inhibited by IFI202. Activation of the AIM2 inflammasome is inhibited by TRIM11, which promotes autophagy-dependent degradation of AIM2. Functionally, sensor component of the AIM2 inflammasome, which mediates inflammasome activation in response to the presence of double-stranded DNA (dsDNA) in the cytosol, leading to subsequent pyroptosis. Inflammasomes are supramolecular complexes that assemble in the cytosol in response to pathogens and other damage-associated signals and play critical roles in innate immunity and inflammation. Acts as a recognition receptor (PRR): specifically recognizes and binds dsDNA in the cytosol, and mediates the formation of the inflammasome polymeric complex composed of AIM2, CASP1 and PYCARD/ASC. Recruitment of pro-caspase-1 (proCASP1) to the AIM2 inflammasome promotes caspase-1 (CASP1) activation, which subsequently cleaves and activates inflammatory cytokines IL1B and IL18 and gasdermin-D (GSDMD), promoting cytokine secretion. In some cells, CASP1 activation mediates cleavage and activation of GSDMD, triggering pyroptosis without promoting cytokine secretion. Detects cytosolic dsDNA of viral and bacterial origin in a non-sequence-specific manner. Involved in the DNA damage response caused by acute ionizing radiation by mediating pyroptosis of intestinal epithelial cells and bone marrow cells in response to double-strand DNA breaks. Mechanistically, AIM2 senses DNA damage in the nucleus to mediate inflammasome assembly and inflammatory cell death. Also acts as a regulator of neurodevelopment via its role in the DNA damage response: acts by promoting neural cell death in response to DNA damage in the developing brain, thereby purging genetically compromised cells of the central nervous system. Pyroptosis mediated by the AIM2 inflammasome in response to DNA damage is dependent on GSDMD without involving IL1B and IL18 cytokine secretion. Also acts as a mediator of pyroptosis, necroptosis and apoptosis (PANoptosis), an integral part of host defense against pathogens, in response to bacterial infection. Can also trigger PYCARD/ASC-dependent, caspase-1-independent cell death that involves caspase-8 (CASP8). In terms of biological role, also acts as a tumor suppressor independently of its role in inflammatory response. Able to suppress overt cell proliferation in enterocytes: restricts stem cell proliferation in the intestinal mucosa in an inflammasome-independent manner, contributing to a decrease in the likelihood of colorectal cancer development. AIM2 suppresses cell proliferation by inhibiting phosphorylation of AKT1 at 'Ser-473', preventing AKT1 activation and AKT-mTOR signaling pathway. Inhibits AKT1 phosphorylation both by inhibiting the activity of PRKDC/DNA-PK kinase and promoting dephosphorylation by PP2A phosphatase. Also acts as a key regulator of regulatory T-cells (Treg) homeostasis by promoting their stability: acts by preventing AKT1 activation. Its role in Treg homeostasis is important to restain autoimmune diseases. The chain is Interferon-inducible protein AIM2 from Mus musculus (Mouse).